Here is a 188-residue protein sequence, read N- to C-terminus: Holliday junction branch migration complex subunit RuvA (188 aa).

Residues 1–62 (MIVGVRGVLV…EDAQLLYGFL (62 aa)) are domain I. Positions 63–135 (ELGEKKLFER…LSGFDTELII (73 aa)) are domain II. The segment at 135-139 (ISASE) is flexible linker. Residues 140 to 188 (PKSLAVAQASEALESLGFKKDKISKALGSCSAVDTAILVKEALKLLQTI) are domain III.

Belongs to the RuvA family. As to quaternary structure, homotetramer. Forms an RuvA(8)-RuvB(12)-Holliday junction (HJ) complex. HJ DNA is sandwiched between 2 RuvA tetramers; dsDNA enters through RuvA and exits via RuvB. An RuvB hexamer assembles on each DNA strand where it exits the tetramer. Each RuvB hexamer is contacted by two RuvA subunits (via domain III) on 2 adjacent RuvB subunits; this complex drives branch migration. In the full resolvosome a probable DNA-RuvA(4)-RuvB(12)-RuvC(2) complex forms which resolves the HJ.

It is found in the cytoplasm. The RuvA-RuvB-RuvC complex processes Holliday junction (HJ) DNA during genetic recombination and DNA repair, while the RuvA-RuvB complex plays an important role in the rescue of blocked DNA replication forks via replication fork reversal (RFR). RuvA specifically binds to HJ cruciform DNA, conferring on it an open structure. The RuvB hexamer acts as an ATP-dependent pump, pulling dsDNA into and through the RuvAB complex. HJ branch migration allows RuvC to scan DNA until it finds its consensus sequence, where it cleaves and resolves the cruciform DNA. In Sulfurimonas denitrificans (strain ATCC 33889 / DSM 1251) (Thiomicrospira denitrificans (strain ATCC 33889 / DSM 1251)), this protein is Holliday junction branch migration complex subunit RuvA.